The sequence spans 369 residues: Endoglucanase (369 aa).

Positions methionine 1–alanine 22 are cleaved as a signal peptide. Glutamate 56 (proton donor) is an active-site residue. The Nucleophile role is filled by aspartate 117.

The protein belongs to the glycosyl hydrolase 8 (cellulase D) family.

The protein localises to the secreted. It carries out the reaction Endohydrolysis of (1-&gt;4)-beta-D-glucosidic linkages in cellulose, lichenin and cereal beta-D-glucans.. The protein operates within glycan metabolism; bacterial cellulose biosynthesis. In terms of biological role, hydrolyzes carboxymethylcellulose. The polypeptide is Endoglucanase (bcsZ) (Salmonella typhi).